The chain runs to 405 residues: S-adenosylmethionine synthase (405 aa).

His22 provides a ligand contact to ATP. Asp24 serves as a coordination point for Mg(2+). Glu50 is a K(+) binding site. L-methionine-binding residues include Glu63 and Gln107. The tract at residues 107-117 (QSPDIAQGVNR) is flexible loop. Residues 184 to 186 (DGK), 250 to 251 (RF), Asp259, 265 to 266 (RK), Ala282, and Lys286 each bind ATP. Asp259 is a binding site for L-methionine. Lys290 is a binding site for L-methionine.

Belongs to the AdoMet synthase family. As to quaternary structure, homotetramer; dimer of dimers. Mg(2+) serves as cofactor. The cofactor is K(+).

It localises to the cytoplasm. The catalysed reaction is L-methionine + ATP + H2O = S-adenosyl-L-methionine + phosphate + diphosphate. Its pathway is amino-acid biosynthesis; S-adenosyl-L-methionine biosynthesis; S-adenosyl-L-methionine from L-methionine: step 1/1. Its function is as follows. Catalyzes the formation of S-adenosylmethionine (AdoMet) from methionine and ATP. The overall synthetic reaction is composed of two sequential steps, AdoMet formation and the subsequent tripolyphosphate hydrolysis which occurs prior to release of AdoMet from the enzyme. The protein is S-adenosylmethionine synthase of Roseiflexus castenholzii (strain DSM 13941 / HLO8).